The chain runs to 67 residues: Large ribosomal subunit protein uL30 (67 aa).

The protein belongs to the universal ribosomal protein uL30 family. Part of the 50S ribosomal subunit.

The polypeptide is Large ribosomal subunit protein uL30 (Sinorhizobium medicae (strain WSM419) (Ensifer medicae)).